A 790-amino-acid chain; its full sequence is Alpha,alpha-trehalose-phosphate synthase [UDP-forming] B (790 aa).

The protein in the N-terminal section; belongs to the glycosyltransferase 20 family. It in the C-terminal section; belongs to the trehalose phosphatase family.

The catalysed reaction is D-glucose 6-phosphate + UDP-alpha-D-glucose = alpha,alpha-trehalose 6-phosphate + UDP + H(+). Functionally, synthesizes trehalose 6-phosphate, the precursor for the production of trehalose, the main carbohydrate storage reserve of the dormant spore. Trehalose accumulates in both prestalk and prespore cells and then is rapidly metabolized during terminal differentiation of stalk cells, while being stored in spores, where it serves as the principal energy and carbon source for germination. In Dictyostelium discoideum (Social amoeba), this protein is Alpha,alpha-trehalose-phosphate synthase [UDP-forming] B (tpsB).